Here is a 93-residue protein sequence, read N- to C-terminus: MTKIGFYLATYATIYIILSPGLLATAARENLHHQCFCESPSKCDCFPTTPTPPTSVNKSRKGGPLCTTDGDCKHFCRPKKGVCNIDFETCICQ.

The N-terminal stretch at 1–24 is a signal peptide; the sequence is MTKIGFYLATYATIYIILSPGLLA. Intrachain disulfides connect cysteine 43–cysteine 83, cysteine 66–cysteine 90, and cysteine 72–cysteine 92.

This sequence belongs to the DEFL family.

Its subcellular location is the secreted. This Arabidopsis thaliana (Mouse-ear cress) protein is Putative defensin-like protein 283.